A 366-amino-acid chain; its full sequence is tRNA/tmRNA (uracil-C(5))-methyltransferase (366 aa).

Positions 190, 218, 223, 239, and 299 each coordinate S-adenosyl-L-methionine. Catalysis depends on cysteine 324, which acts as the Nucleophile. Glutamate 358 (proton acceptor) is an active-site residue.

This sequence belongs to the class I-like SAM-binding methyltransferase superfamily. RNA M5U methyltransferase family. TrmA subfamily.

The enzyme catalyses uridine(54) in tRNA + S-adenosyl-L-methionine = 5-methyluridine(54) in tRNA + S-adenosyl-L-homocysteine + H(+). It catalyses the reaction uridine(341) in tmRNA + S-adenosyl-L-methionine = 5-methyluridine(341) in tmRNA + S-adenosyl-L-homocysteine + H(+). Its function is as follows. Dual-specificity methyltransferase that catalyzes the formation of 5-methyluridine at position 54 (m5U54) in all tRNAs, and that of position 341 (m5U341) in tmRNA (transfer-mRNA). This Salmonella typhi protein is tRNA/tmRNA (uracil-C(5))-methyltransferase.